The sequence spans 218 residues: Pyridoxine/pyridoxamine 5'-phosphate oxidase (218 aa).

Residues 11–14 (RVEY) and lysine 75 each bind substrate. FMN is bound by residues 70–75 (RTVLCK), 85–86 (YT), lysine 92, and glutamine 114. Substrate-binding residues include tyrosine 132, arginine 136, and serine 140. FMN is bound by residues 149–150 (QS) and tryptophan 195. Residue 201–203 (RVH) coordinates substrate. Residue arginine 205 coordinates FMN.

It belongs to the pyridoxamine 5'-phosphate oxidase family. As to quaternary structure, homodimer. FMN serves as cofactor.

It catalyses the reaction pyridoxamine 5'-phosphate + O2 + H2O = pyridoxal 5'-phosphate + H2O2 + NH4(+). It carries out the reaction pyridoxine 5'-phosphate + O2 = pyridoxal 5'-phosphate + H2O2. The protein operates within cofactor metabolism; pyridoxal 5'-phosphate salvage; pyridoxal 5'-phosphate from pyridoxamine 5'-phosphate: step 1/1. Its pathway is cofactor metabolism; pyridoxal 5'-phosphate salvage; pyridoxal 5'-phosphate from pyridoxine 5'-phosphate: step 1/1. Catalyzes the oxidation of either pyridoxine 5'-phosphate (PNP) or pyridoxamine 5'-phosphate (PMP) into pyridoxal 5'-phosphate (PLP). The chain is Pyridoxine/pyridoxamine 5'-phosphate oxidase from Mycolicibacterium gilvum (strain PYR-GCK) (Mycobacterium gilvum (strain PYR-GCK)).